Consider the following 386-residue polypeptide: Nucleosome assembly protein 1-like 4 (386 aa).

The disordered stretch occupies residues 1–28 (MAENSLSDGGPADSVEAAKNASNTEKLT). At Ala2 the chain carries N-acetylalanine. Ser5, Ser7, and Ser49 each carry phosphoserine. At Thr51 the chain carries Phosphothreonine. Phosphoserine occurs at positions 53 and 54. Position 58 is a phosphothreonine (Thr58). Lys105 is subject to N6-acetyllysine. Ser125 is subject to Phosphoserine. N6-acetyllysine is present on Lys146. The Nuclear localization signal signature appears at 265-271 (IKKKQKH). The residue at position 304 (Ser304) is a Phosphoserine. Positions 339–370 (AIEDDDNFEEGEEGEEEELEGDEEGEDEDDAD) are enriched in acidic residues. Residues 339 to 386 (AIEDDDNFEEGEEGEEEELEGDEEGEDEDDADVNPKKEPIQPAECKQQ) form a disordered region.

It belongs to the nucleosome assembly protein (NAP) family. Interacts with core (H2A, H2B, H3, H4) and linker (H1) histones. Post-translationally, polyglutamylated and polyglycylated. These 2 modifications occur exclusively on glutamate residues and result in either polyglutamate or polyglycine chains on the gamma-carboxyl group. Both modifications can coexist on the same protein on adjacent residues, and lowering polyglycylation levels increases polyglutamylation, and reciprocally. Polyglutamylated by TTLL4. Phosphorylated at the G0/G1 boundary but it is not phosphorylated in S-phase. Phosphorylated protein remains in the cytoplasm in a complex with histones during the G0/G1 transition, whereas dephosphorylation triggers its transport into the nucleus at the G1/S-boundary.

The protein resides in the nucleus. It is found in the cytoplasm. Functionally, acts as a histone chaperone in nucleosome assembly. The polypeptide is Nucleosome assembly protein 1-like 4 (Nap1l4) (Rattus norvegicus (Rat)).